The sequence spans 240 residues: UDP-2,3-diacylglucosamine hydrolase (240 aa).

Positions 8, 10, 41, 79, and 114 each coordinate Mn(2+). A substrate-binding site is contributed by 79–80 (NR). The substrate site is built by aspartate 122, serine 160, asparagine 164, lysine 167, and histidine 195. The Mn(2+) site is built by histidine 195 and histidine 197.

It belongs to the LpxH family. It depends on Mn(2+) as a cofactor.

The protein resides in the cell inner membrane. It catalyses the reaction UDP-2-N,3-O-bis[(3R)-3-hydroxytetradecanoyl]-alpha-D-glucosamine + H2O = 2-N,3-O-bis[(3R)-3-hydroxytetradecanoyl]-alpha-D-glucosaminyl 1-phosphate + UMP + 2 H(+). The protein operates within glycolipid biosynthesis; lipid IV(A) biosynthesis; lipid IV(A) from (3R)-3-hydroxytetradecanoyl-[acyl-carrier-protein] and UDP-N-acetyl-alpha-D-glucosamine: step 4/6. In terms of biological role, hydrolyzes the pyrophosphate bond of UDP-2,3-diacylglucosamine to yield 2,3-diacylglucosamine 1-phosphate (lipid X) and UMP by catalyzing the attack of water at the alpha-P atom. Involved in the biosynthesis of lipid A, a phosphorylated glycolipid that anchors the lipopolysaccharide to the outer membrane of the cell. This Photorhabdus laumondii subsp. laumondii (strain DSM 15139 / CIP 105565 / TT01) (Photorhabdus luminescens subsp. laumondii) protein is UDP-2,3-diacylglucosamine hydrolase.